Consider the following 402-residue polypeptide: Tryptophan synthase beta chain (402 aa).

Position 91 is an N6-(pyridoxal phosphate)lysine (lysine 91).

It belongs to the TrpB family. As to quaternary structure, tetramer of two alpha and two beta chains. Requires pyridoxal 5'-phosphate as cofactor.

The catalysed reaction is (1S,2R)-1-C-(indol-3-yl)glycerol 3-phosphate + L-serine = D-glyceraldehyde 3-phosphate + L-tryptophan + H2O. It functions in the pathway amino-acid biosynthesis; L-tryptophan biosynthesis; L-tryptophan from chorismate: step 5/5. Functionally, the beta subunit is responsible for the synthesis of L-tryptophan from indole and L-serine. This chain is Tryptophan synthase beta chain (trpB), found in Lactococcus lactis subsp. lactis (strain IL1403) (Streptococcus lactis).